Reading from the N-terminus, the 148-residue chain is Lipid droplet organization protein LDO16 (148 aa).

Residues 1–7 (MVSTATF) lie on the Cytoplasmic side of the membrane. A helical transmembrane segment spans residues 8–28 (FFFVYLTLFVVIGFFSSLFII). A topological domain (lumenal) is located at residue Pro-29. A helical transmembrane segment spans residues 30 to 50 (LLGISFVFAIGVVSFGFCSNM). Residues 51-148 (SFKMAQLIYV…NKAGNKFQLS (98 aa)) lie on the Cytoplasmic side of the membrane. Positions 83–110 (QEPQEPLSTLRPVSNPTIPSPLRQTARP) are disordered. The span at 93 to 109 (RPVSNPTIPSPLRQTAR) shows a compositional bias: polar residues. Ser-102 bears the Phosphoserine mark.

This sequence belongs to the OSW5 family. As to quaternary structure, interacts specifically with the seipin complex FLD1-LDB16. Only a fraction appears to associate with the seipin core components, suggesting that it may be an ancillary subunit of the complex. Found to interact with many mitochondrial and peroxisomal proteins.

It is found in the endoplasmic reticulum membrane. It localises to the lipid droplet. Its function is as follows. Involved in lipid droplet (LD) organization. Functions primarily upon nutrient depletion, facilitating LD consumption by lipophagy. Required for correct LD distribution during entry into stationary phase, where LDs accumulate at nucleus-vacuole junction (NVJ) contact sites. Involved in membrane interaction in a manner similar to those of SNARE proteins, binding to partners present in mitochondria or peroxisomes. Its partner on the mitochondrion side might be TOM22, a mitochondrial outer membrane protein, linking lipid droplets and mitochondria by protein-protein interaction. Involved in spore wall assembly. In Saccharomyces cerevisiae (strain ATCC 204508 / S288c) (Baker's yeast), this protein is Lipid droplet organization protein LDO16.